The sequence spans 1036 residues: Isoleucine--tRNA ligase (1036 aa).

Residues proline 46–histidine 56 carry the 'HIGH' region motif. The 'KMSKS' region motif lies at lysine 589–arginine 593. Residue lysine 592 coordinates ATP.

This sequence belongs to the class-I aminoacyl-tRNA synthetase family. IleS type 2 subfamily. As to quaternary structure, monomer. Zn(2+) is required as a cofactor.

The protein resides in the cytoplasm. It catalyses the reaction tRNA(Ile) + L-isoleucine + ATP = L-isoleucyl-tRNA(Ile) + AMP + diphosphate. Functionally, catalyzes the attachment of isoleucine to tRNA(Ile). As IleRS can inadvertently accommodate and process structurally similar amino acids such as valine, to avoid such errors it has two additional distinct tRNA(Ile)-dependent editing activities. One activity is designated as 'pretransfer' editing and involves the hydrolysis of activated Val-AMP. The other activity is designated 'posttransfer' editing and involves deacylation of mischarged Val-tRNA(Ile). The sequence is that of Isoleucine--tRNA ligase from Chlamydia trachomatis serovar D (strain ATCC VR-885 / DSM 19411 / UW-3/Cx).